Reading from the N-terminus, the 336-residue chain is Dihydroorotate dehydrogenase (quinone) (336 aa).

FMN-binding positions include 62 to 66 (AGLDK) and Thr86. Residue Lys66 participates in substrate binding. 111 to 115 (NRMGF) contributes to the substrate binding site. FMN is bound by residues Asn139 and Asn172. Asn172 lines the substrate pocket. The Nucleophile role is filled by Ser175. Asn177 lines the substrate pocket. FMN contacts are provided by Lys217 and Thr245. 246 to 247 (NT) lines the substrate pocket. Residues Gly268, Gly297, and 318-319 (YS) contribute to the FMN site.

Belongs to the dihydroorotate dehydrogenase family. Type 2 subfamily. In terms of assembly, monomer. It depends on FMN as a cofactor.

Its subcellular location is the cell membrane. It carries out the reaction (S)-dihydroorotate + a quinone = orotate + a quinol. It participates in pyrimidine metabolism; UMP biosynthesis via de novo pathway; orotate from (S)-dihydroorotate (quinone route): step 1/1. Functionally, catalyzes the conversion of dihydroorotate to orotate with quinone as electron acceptor. The sequence is that of Dihydroorotate dehydrogenase (quinone) from Cronobacter sakazakii (strain ATCC BAA-894) (Enterobacter sakazakii).